A 325-amino-acid polypeptide reads, in one-letter code: Phosphate acyltransferase (325 aa).

The protein belongs to the PlsX family. In terms of assembly, homodimer. Probably interacts with PlsY.

Its subcellular location is the cytoplasm. It catalyses the reaction a fatty acyl-[ACP] + phosphate = an acyl phosphate + holo-[ACP]. It functions in the pathway lipid metabolism; phospholipid metabolism. In terms of biological role, catalyzes the reversible formation of acyl-phosphate (acyl-PO(4)) from acyl-[acyl-carrier-protein] (acyl-ACP). This enzyme utilizes acyl-ACP as fatty acyl donor, but not acyl-CoA. This chain is Phosphate acyltransferase, found in Staphylococcus epidermidis (strain ATCC 35984 / DSM 28319 / BCRC 17069 / CCUG 31568 / BM 3577 / RP62A).